A 300-amino-acid polypeptide reads, in one-letter code: Ribosomal protein bS6--L-glutamate ligase (300 aa).

The ATP-grasp domain occupies Met104–Glu287. Residues Lys141, Glu178–Tyr179, Asp187, and Arg211–Asn213 contribute to the ATP site. Mg(2+)-binding residues include Asp248, Glu260, and Asn262. Mn(2+)-binding residues include Asp248, Glu260, and Asn262.

This sequence belongs to the RimK family. Mg(2+) serves as cofactor. Mn(2+) is required as a cofactor.

In terms of biological role, an L-glutamate ligase that catalyzes the ATP-dependent post-translational addition of glutamate residues to the C-terminus of ribosomal protein bS6 (RpsF). Is also able to catalyze the synthesis of poly-alpha-glutamate in vitro, via ATP hydrolysis from unprotected glutamate as substrate. The number of glutamate residues added to either RpsF or to poly-alpha-glutamate changes with pH. The polypeptide is Ribosomal protein bS6--L-glutamate ligase (Escherichia fergusonii (strain ATCC 35469 / DSM 13698 / CCUG 18766 / IAM 14443 / JCM 21226 / LMG 7866 / NBRC 102419 / NCTC 12128 / CDC 0568-73)).